Reading from the N-terminus, the 124-residue chain is V-type proton ATPase subunit F (124 aa).

It belongs to the V-ATPase F subunit family. As to quaternary structure, V-ATPase is a heteromultimeric enzyme composed of a peripheral catalytic V1 complex (components A to H) attached to an integral membrane V0 proton pore complex (components: a, c, c', c'', d, e, f and VOA1).

The protein localises to the vacuole membrane. Subunit of the V1 complex of vacuolar(H+)-ATPase (V-ATPase), a multisubunit enzyme composed of a peripheral complex (V1) that hydrolyzes ATP and a membrane integral complex (V0) that translocates protons. V-ATPase is responsible for acidifying and maintaining the pH of intracellular compartments. In Neurospora crassa (strain ATCC 24698 / 74-OR23-1A / CBS 708.71 / DSM 1257 / FGSC 987), this protein is V-type proton ATPase subunit F (vma-7).